The following is an 861-amino-acid chain: Leucine--tRNA ligase (861 aa).

The short motif at 42–52 (PYPSGRLHMGH) is the 'HIGH' region element. Positions 619-623 (KMSKS) match the 'KMSKS' region motif. An ATP-binding site is contributed by K622.

This sequence belongs to the class-I aminoacyl-tRNA synthetase family.

Its subcellular location is the cytoplasm. The enzyme catalyses tRNA(Leu) + L-leucine + ATP = L-leucyl-tRNA(Leu) + AMP + diphosphate. The polypeptide is Leucine--tRNA ligase (Haemophilus influenzae (strain ATCC 51907 / DSM 11121 / KW20 / Rd)).